Here is a 621-residue protein sequence, read N- to C-terminus: Probable serine/threonine-protein kinase WNK2 (621 aa).

Positions 28 to 286 (GRYTEVLGKG…AQELLMDPFL (259 aa)) constitute a Protein kinase domain. ATP contacts are provided by residues 108 to 111 (TEVF) and Lys158. Residue Asp175 is the Proton acceptor of the active site. Disordered stretches follow at residues 438 to 490 (SVEN…SDSP), 501 to 520 (VEPHIGGNMPNGILKKNDTD), 527 to 553 (GTSVDLPNPSMIDRKSGVASVSTSPQS), and 600 to 621 (HREETLTRCRLKADERNRSDKP).

This sequence belongs to the protein kinase superfamily. Ser/Thr protein kinase family. WNK subfamily.

The catalysed reaction is L-seryl-[protein] + ATP = O-phospho-L-seryl-[protein] + ADP + H(+). The enzyme catalyses L-threonyl-[protein] + ATP = O-phospho-L-threonyl-[protein] + ADP + H(+). The sequence is that of Probable serine/threonine-protein kinase WNK2 (WNK2) from Oryza sativa subsp. japonica (Rice).